We begin with the raw amino-acid sequence, 133 residues long: Histone H2A.1 (133 aa).

Residues 1-23 (MSTTGKGGKAKGKTASSKQVSRS) are disordered. S2 carries the post-translational modification N-acetylserine. N6-acetyllysine is present on residues K6, K9, K11, K13, and K18. Residue S123 is modified to Phosphoserine. K124 participates in a covalent cross-link: Glycyl lysine isopeptide (Lys-Gly) (interchain with G-Cter in ubiquitin).

Belongs to the histone H2A family. The nucleosome is a histone octamer containing two molecules each of H2A, H2B, H3 and H4 assembled in one H3-H4 heterotetramer and two H2A-H2B heterodimers. The octamer wraps approximately 147 bp of DNA. Post-translationally, monoubiquitination of Lys-124 gives a specific tag for epigenetic transcriptional repression. Acetylation occurs almost exclusively in the MAC.

It localises to the nucleus. Its subcellular location is the chromosome. Core component of nucleosome. Nucleosomes wrap and compact DNA into chromatin, limiting DNA accessibility to the cellular machineries which require DNA as a template. Histones thereby play a central role in transcription regulation, DNA repair, DNA replication and chromosomal stability. DNA accessibility is regulated via a complex set of post-translational modifications of histones, also called histone code, and nucleosome remodeling. This chain is Histone H2A.1 (HTA2), found in Tetrahymena thermophila (strain SB210).